The primary structure comprises 447 residues: Monocarboxylate transporter 11 (447 aa).

Residues 1-11 (MTPKPAGPPDG) lie on the Cytoplasmic side of the membrane. A run of 12 helical transmembrane segments spans residues 12–32 (GWGW…YGLL), 54–74 (AWVS…GSAL), 80–100 (ARPV…FSAF), 107–127 (LYLG…APAL), 139–159 (VLAV…LAPA), 162–182 (FLLD…VTLH), 219–239 (AFSV…VPYV), 249–269 (GMGG…DACA), 288–308 (LVVF…VPTV), 330–350 (GSYA…GGVV), 354–374 (GLVM…SGFL), and 383–403 (ASFL…MGLP). The Cytoplasmic segment spans residues 404–447 (RALPSCRPASPPATPPPERGELLPVPQVSLLSAGGTGSIRDTTC).

It belongs to the major facilitator superfamily. Monocarboxylate porter (TC 2.A.1.13) family. Interacts with isoform 2 of BSG.

The protein resides in the endoplasmic reticulum membrane. Its subcellular location is the cell membrane. The catalysed reaction is pyruvate(out) + H(+)(out) = pyruvate(in) + H(+)(in). Its function is as follows. Proton-linked monocarboxylate transporter. It catalyzes the transport of pyruvate across the plasma membrane. Probably involved in hepatic lipid metabolism: overexpression results in an increase of triacylglycerol(TAG) levels, small increases in intracellular diacylglycerols and decreases in lysophosphatidylcholine, cholesterol ester and sphingomyelin lipids. The polypeptide is Monocarboxylate transporter 11 (Slc16a11) (Mus musculus (Mouse)).